The primary structure comprises 348 residues: Protein RecA (348 aa).

Residue 65–72 (GPESSGKT) coordinates ATP.

The protein belongs to the RecA family.

It is found in the cytoplasm. Its function is as follows. Can catalyze the hydrolysis of ATP in the presence of single-stranded DNA, the ATP-dependent uptake of single-stranded DNA by duplex DNA, and the ATP-dependent hybridization of homologous single-stranded DNAs. It interacts with LexA causing its activation and leading to its autocatalytic cleavage. This Vibrio anguillarum (strain ATCC 68554 / 775) (Listonella anguillarum) protein is Protein RecA.